The primary structure comprises 258 residues: Glutamate racemase (258 aa).

Residues 12–13 (DS) and 44–45 (YG) each bind substrate. The active-site Proton donor/acceptor is Cys75. Substrate is bound at residue 76-77 (NT). Residue Cys186 is the Proton donor/acceptor of the active site. Substrate is bound at residue 187–188 (TH).

The protein belongs to the aspartate/glutamate racemases family.

It carries out the reaction L-glutamate = D-glutamate. Its pathway is cell wall biogenesis; peptidoglycan biosynthesis. Functionally, provides the (R)-glutamate required for cell wall biosynthesis. The protein is Glutamate racemase of Clostridium botulinum (strain Alaska E43 / Type E3).